The following is a 71-amino-acid chain: Putative membrane protein insertion efficiency factor (71 aa).

This sequence belongs to the UPF0161 family.

It is found in the cell membrane. Could be involved in insertion of integral membrane proteins into the membrane. This Ruminiclostridium cellulolyticum (strain ATCC 35319 / DSM 5812 / JCM 6584 / H10) (Clostridium cellulolyticum) protein is Putative membrane protein insertion efficiency factor.